Here is a 278-residue protein sequence, read N- to C-terminus: BPI fold-containing family A member 1 (278 aa).

An N-terminal signal peptide occupies residues 1–19; it reads MFLVGSLVVLCGLLAHSTA. Repeat repeat units lie at residues 23-28, 30-36, 39-44, and 47-52; these read GLPLPL, QGPPLPL, GPPLPL, and GQLLPL. The 4 X 6 AA repeats of G-[LPQ]-[PL]-L-P-L stretch occupies residues 23 to 52; that stretch reads GLPLPLGQGPPLPLNQGPPLPLNQGQLLPL. An important for surfactant activity and antibacterial properties region spans residues 112–117; sequence LVGGLL. Asparagine 182 and asparagine 228 each carry an N-linked (GlcNAc...) asparagine glycan. Cysteine 204 and cysteine 246 are disulfide-bonded.

Belongs to the BPI/LBP/Plunc superfamily. Plunc family. Monomer. Interacts (via N-terminus) with SCNN1B, a subunit of the heterotrimeric epithelial sodium channel (ENaC); this inhibits proteolytic activation of ENaC. As to expression, detected in airway epithelia (trachea and lung) and in bronchoalveolar fluid (at protein level). Upper airways, nasopharyngeal epithelium and thymus. Highest expression in the trachea and progressive decrease from proximal (bronchial) to distal (bronchiolar) airways. No expression is detected in the terminal bronchioles, respiratory bronchioles or lung alveoli.

The protein resides in the secreted. Functionally, lipid-binding protein which shows high specificity for the surfactant phospholipid dipalmitoylphosphatidylcholine (DPPC). Plays a role in the innate immune responses of the upper airways. Reduces the surface tension in secretions from airway epithelia and inhibits the formation of biofilm by pathogenic Gram-negative bacteria, such as P.aeruginosa and K.pneumoniae. Negatively regulates proteolytic cleavage of SCNN1G, an event that is required for activation of the epithelial sodium channel (ENaC), and thereby contributes to airway surface liquid homeostasis and proper clearance of mucus. Plays a role in the airway inflammatory response after exposure to irritants. May attract macrophages and neutrophils. This chain is BPI fold-containing family A member 1 (Bpifa1), found in Mus musculus (Mouse).